The primary structure comprises 211 residues: tRNA (guanine-N(7)-)-methyltransferase (211 aa).

4 residues coordinate S-adenosyl-L-methionine: E44, D69, D96, and D118. Residue D118 is part of the active site. A substrate-binding site is contributed by K122. An interaction with RNA region spans residues 124–129 (KHEKRR). Substrate contacts are provided by residues D154 and 191-194 (TEYE).

This sequence belongs to the class I-like SAM-binding methyltransferase superfamily. TrmB family.

It carries out the reaction guanosine(46) in tRNA + S-adenosyl-L-methionine = N(7)-methylguanosine(46) in tRNA + S-adenosyl-L-homocysteine. Its pathway is tRNA modification; N(7)-methylguanine-tRNA biosynthesis. Functionally, catalyzes the formation of N(7)-methylguanine at position 46 (m7G46) in tRNA. The chain is tRNA (guanine-N(7)-)-methyltransferase from Streptococcus uberis (strain ATCC BAA-854 / 0140J).